A 348-amino-acid chain; its full sequence is Terpene cyclase ctvD (348 aa).

A helical membrane pass occupies residues 2–22 (ALSAYFLLCLSVLGLDAIYGF). Residue asparagine 51 is glycosylated (N-linked (GlcNAc...) asparagine). Transmembrane regions (helical) follow at residues 77 to 97 (PGLSLQAFHFLGAIVAVWVAI), 116 to 136 (LFAMLSQVVAIAVIVPLWCAI), 161 to 181 (LIPISMVLGFGIPTIGMLLPE), 191 to 211 (QIAIAVWQIWPIYVALWHWGL), 235 to 255 (FAFVCAIIPHAVSWGLSLTLI), 283 to 303 (GLWFLQWDHLIGMGSFLLWAM), and 323 to 343 (LKVGVLCLISGPCGAAVWLLW).

Belongs to the membrane-bound ascI terpene cyclase family.

Its subcellular location is the membrane. The protein operates within mycotoxin biosynthesis. Hydrolase; part of the gene cluster that mediates the biosynthesis of citreoviridin, an inhibitor of the of F1-ATPase beta-subunit. The HR-PKS ctvA accepts acetyl-CoA as the starter unit and catalyzes eight iterations of malonyl-CoA extension and four iterations of SAM-dependent methylation at C4, C12, C14, and C16. The KR and DH domains selectively act on the first six iterations to generate the hexaene chain. In the last three iterations, the KR and DH domains terminate their functions to yield a beta,delta-diketo ester moiety, which then undergoes intramolecular cyclization to yield an alpha-pyrone intermediate. Subsequently, ctvB methylates the alpha-pyrone hydroxyl group to generate citreomontanin. In order to form the tetrahydrofuran ring with the correct stereochemistry, the terminal alkenes of citreomontanin need to undergo isomerization to yield a (17Z)-hexaene, a step that could be catalyzed by ctvC. The (17Z)-hexaene then undergoes bisepoxidation by ctvC to form a (17R,16R,15S,14R)-bisepoxide moiety. Lastly, ctvD acts as a regioselective hydrolase to form the tetrahydrofuran ring with the substituents in the correct absolute configuration, completing the biosynthesis of citreoviridin. The chain is Terpene cyclase ctvD from Aspergillus terreus (strain NIH 2624 / FGSC A1156).